Consider the following 248-residue polypeptide: MGRGRVELKRIENKINRQVTFAKRRNGLLKKAYELSVLCDAEVALIIFSNRGKLYEFCSGQSMTRTLERYQKFSYGGPDTAIQNKENELVQSSRNEYLKLKARVENLQRTQRNLLGEDLGTLGIKELEQLEKQLDSSLRHIRSTRTQHMLDQLTDLQRREQMLCEANKCLRRKLEESNQLHGQVWEHGATLLGYERQSPHAVQQVPPHGGNGFFHSLEAAAEPTLQIGFTPEQMNNSCVTAFMPTWLP.

Positions 1–61 (MGRGRVELKR…GKLYEFCSGQ (61 aa)) constitute an MADS-box domain. The region spanning 90–180 (VQSSRNEYLK…RRKLEESNQL (91 aa)) is the K-box domain.

May interact with the K-box of MADS6 and MADS16. May interact with MADS13 and MADS18. Binds to FCA. Expressed in lodicules, stamens and carpels.

Its subcellular location is the nucleus. In terms of biological role, probable transcription factor. May be involved in the control of flowering time. This is MADS-box transcription factor 8 (MADS8) from Oryza sativa subsp. japonica (Rice).